We begin with the raw amino-acid sequence, 311 residues long: Homoserine kinase (311 aa).

88 to 98 lines the ATP pocket; the sequence is PEGLGLGSSGA.

It belongs to the GHMP kinase family. Homoserine kinase subfamily.

The protein resides in the cytoplasm. The catalysed reaction is L-homoserine + ATP = O-phospho-L-homoserine + ADP + H(+). It functions in the pathway amino-acid biosynthesis; L-threonine biosynthesis; L-threonine from L-aspartate: step 4/5. Functionally, catalyzes the ATP-dependent phosphorylation of L-homoserine to L-homoserine phosphate. This chain is Homoserine kinase, found in Saccharolobus islandicus (strain Y.N.15.51 / Yellowstone #2) (Sulfolobus islandicus).